Here is a 142-residue protein sequence, read N- to C-terminus: Large ribosomal subunit protein uL11 (142 aa).

The protein belongs to the universal ribosomal protein uL11 family. Part of the ribosomal stalk of the 50S ribosomal subunit. Interacts with L10 and the large rRNA to form the base of the stalk. L10 forms an elongated spine to which L12 dimers bind in a sequential fashion forming a multimeric L10(L12)X complex. In terms of processing, one or more lysine residues are methylated.

Forms part of the ribosomal stalk which helps the ribosome interact with GTP-bound translation factors. The protein is Large ribosomal subunit protein uL11 of Brucella anthropi (strain ATCC 49188 / DSM 6882 / CCUG 24695 / JCM 21032 / LMG 3331 / NBRC 15819 / NCTC 12168 / Alc 37) (Ochrobactrum anthropi).